Here is a 377-residue protein sequence, read N- to C-terminus: Tyrosine-protein phosphatase 2 (377 aa).

The Tyrosine-protein phosphatase domain occupies 27–347 (IDKEFNFILQ…RFCYLAISEA (321 aa)). The segment at 77–137 (IDDDDDDEDD…EDHGGSGDEG (61 aa)) is disordered. The span at 78–91 (DDDDDDEDDNEDDI) shows a compositional bias: acidic residues. The span at 92–102 (IVSNNNNNNNN) shows a compositional bias: low complexity. Residues 113–123 (GSSGQSDVMSN) are compositionally biased toward polar residues. The active-site Phosphocysteine intermediate is the Cys281.

It belongs to the protein-tyrosine phosphatase family. Non-receptor class subfamily.

The catalysed reaction is O-phospho-L-tyrosyl-[protein] + H2O = L-tyrosyl-[protein] + phosphate. The polypeptide is Tyrosine-protein phosphatase 2 (ptpB) (Dictyostelium discoideum (Social amoeba)).